A 290-amino-acid chain; its full sequence is Ribosomal RNA small subunit methyltransferase A (290 aa).

S-adenosyl-L-methionine contacts are provided by N27, L29, G54, E75, D100, and N125.

The protein belongs to the class I-like SAM-binding methyltransferase superfamily. rRNA adenine N(6)-methyltransferase family. RsmA subfamily.

It is found in the cytoplasm. It carries out the reaction adenosine(1518)/adenosine(1519) in 16S rRNA + 4 S-adenosyl-L-methionine = N(6)-dimethyladenosine(1518)/N(6)-dimethyladenosine(1519) in 16S rRNA + 4 S-adenosyl-L-homocysteine + 4 H(+). Its function is as follows. Specifically dimethylates two adjacent adenosines (A1518 and A1519) in the loop of a conserved hairpin near the 3'-end of 16S rRNA in the 30S particle. May play a critical role in biogenesis of 30S subunits. The sequence is that of Ribosomal RNA small subunit methyltransferase A from Streptococcus pyogenes serotype M3 (strain ATCC BAA-595 / MGAS315).